We begin with the raw amino-acid sequence, 137 residues long: Acetyltransferase Atu2258 (137 aa).

The N-acetyltransferase domain maps to 1 to 137 (MNFVLSDVAD…QSITWLEKRF (137 aa)). Residues 66–68 (LFV), G74, and 108–110 (RTY) contribute to the CoA site.

Its function is as follows. Catalyzes the transfer of an acetyl group from acetyl coenzyme A (AcCoA) to an acceptor substrate and releases both CoA and the acetylated product. It prefers glucosamine 6-phosphate or dopamine. It can also use the thialysine, N(8)-acetylspermidine, chloramphenicol, puromycin, polymyxin B, and 4-aminobutyrate ethyl ester. This Agrobacterium fabrum (strain C58 / ATCC 33970) (Agrobacterium tumefaciens (strain C58)) protein is Acetyltransferase Atu2258.